The sequence spans 285 residues: UPF0703 protein YcgQ (285 aa).

4 helical membrane-spanning segments follow: residues 4-24 (LLVLMGFTFFFYHLHASGNLT), 34-54 (LSFIAIFLLAILTAVQAYLFI), 89-109 (LIYVVFLFPLVSGIFFPIATL), and 210-230 (FVLRFGIIHCIADSGVYGMLV).

Belongs to the UPF0703 family.

The protein resides in the cell membrane. This chain is UPF0703 protein YcgQ (ycgQ), found in Bacillus subtilis (strain 168).